Reading from the N-terminus, the 573-residue chain is ESX-1 secretion system protein EccA1 (573 aa).

An ATP-binding site is contributed by 334 to 341 (GPPGTGKT).

The protein belongs to the CbxX/CfxQ family. In terms of assembly, part of the ESX-1 / type VII secretion system (T7SS), which is composed of cytosolic and membrane components.

It is found in the cytoplasm. Functionally, part of the ESX-1 specialized secretion system, which delivers several virulence factors to host cells during infection, including the key virulence factors EsxA (ESAT-6) and EsxB (CFP-10). EccA1 exhibits ATPase activity and may provide energy for the export of ESX-1 substrates. The protein is ESX-1 secretion system protein EccA1 of Mycobacterium tuberculosis (strain CDC 1551 / Oshkosh).